Reading from the N-terminus, the 428-residue chain is Elongation factor 1-alpha (428 aa).

Positions 5 to 225 (KPILNVAFIG…DGFQPPEKPT (221 aa)) constitute a tr-type G domain. The G1 stretch occupies residues 14 to 21 (GHVDAGKS). 14 to 21 (GHVDAGKS) contributes to the GTP binding site. Mg(2+) is bound at residue Ser21. The G2 stretch occupies residues 70-74 (GVTID). A G3 region spans residues 91-94 (DCPG). Residues 91 to 95 (DCPGH) and 149 to 152 (NKMD) each bind GTP. The segment at 149-152 (NKMD) is G4. Positions 189 to 191 (ASL) are G5.

It belongs to the TRAFAC class translation factor GTPase superfamily. Classic translation factor GTPase family. EF-Tu/EF-1A subfamily.

The protein resides in the cytoplasm. The enzyme catalyses GTP + H2O = GDP + phosphate + H(+). Its function is as follows. GTP hydrolase that promotes the GTP-dependent binding of aminoacyl-tRNA to the A-site of ribosomes during protein biosynthesis. The sequence is that of Elongation factor 1-alpha from Methanococcus vannielii (strain ATCC 35089 / DSM 1224 / JCM 13029 / OCM 148 / SB).